The chain runs to 463 residues: ATP synthase subunit beta (463 aa).

152–159 (GGAGVGKT) provides a ligand contact to ATP.

This sequence belongs to the ATPase alpha/beta chains family. F-type ATPases have 2 components, CF(1) - the catalytic core - and CF(0) - the membrane proton channel. CF(1) has five subunits: alpha(3), beta(3), gamma(1), delta(1), epsilon(1). CF(0) has three main subunits: a(1), b(2) and c(9-12). The alpha and beta chains form an alternating ring which encloses part of the gamma chain. CF(1) is attached to CF(0) by a central stalk formed by the gamma and epsilon chains, while a peripheral stalk is formed by the delta and b chains.

The protein resides in the cell inner membrane. It catalyses the reaction ATP + H2O + 4 H(+)(in) = ADP + phosphate + 5 H(+)(out). In terms of biological role, produces ATP from ADP in the presence of a proton gradient across the membrane. The catalytic sites are hosted primarily by the beta subunits. The sequence is that of ATP synthase subunit beta from Shewanella oneidensis (strain ATCC 700550 / JCM 31522 / CIP 106686 / LMG 19005 / NCIMB 14063 / MR-1).